The following is a 125-amino-acid chain: Histone H2A (125 aa).

Residues 1-18 are compositionally biased toward basic residues; sequence MSGRGKGGKVKAKAKSRS. Positions 1–21 are disordered; that stretch reads MSGRGKGGKVKAKAKSRSSRA. N-acetylserine is present on Ser2. Phosphoserine is present on Ser2. Lys119 is covalently cross-linked (Glycyl lysine isopeptide (Lys-Gly) (interchain with G-Cter in ubiquitin)).

It belongs to the histone H2A family. In terms of assembly, the nucleosome is a histone octamer containing two molecules each of H2A, H2B, H3 and H4 assembled in one H3-H4 heterotetramer and two H2A-H2B heterodimers. The octamer wraps approximately 147 bp of DNA. Monoubiquitination of Lys-119 gives a specific tag for epigenetic transcriptional repression. Post-translationally, phosphorylation on Ser-2 is enhanced during mitosis. Phosphorylation on Ser-2 directly represses transcription.

It localises to the nucleus. The protein resides in the chromosome. Functionally, core component of nucleosome. Nucleosomes wrap and compact DNA into chromatin, limiting DNA accessibility to the cellular machineries which require DNA as a template. Histones thereby play a central role in transcription regulation, DNA repair, DNA replication and chromosomal stability. DNA accessibility is regulated via a complex set of post-translational modifications of histones, also called histone code, and nucleosome remodeling. This Chironomus thummi thummi (Midge) protein is Histone H2A.